Reading from the N-terminus, the 269-residue chain is Aquaporin-1 (269 aa).

Residues 2 to 11 (ASEFKKKLFW) lie on the Cytoplasmic side of the membrane. The chain crosses the membrane as a helical span at residues 12–29 (RAVVAEFLATTLFVFISI). The Extracellular portion of the chain corresponds to 30 to 46 (GSALGFKYPVGNNQTAV). N42 carries N-linked (GlcNAc...) asparagine glycosylation. A helical membrane pass occupies residues 47 to 65 (QDNVKVSLAFGLSIATLAQ). At 66-68 (SVG) the chain is on the cytoplasmic side. Residues 69–82 (HISGAHLNPAVTLG) lie within the membrane without spanning it. Positions 76–78 (NPA) match the NPA 1 motif. The Cytoplasmic portion of the chain corresponds to 83 to 90 (LLLSCQIS). The chain crosses the membrane as a helical span at residues 91–109 (IFRALMYIIAQCVGAIVAT). Residues 110-133 (AILSGITSSLTGNSLGRNDLADGV) are Extracellular-facing. The chain crosses the membrane as a helical span at residues 134 to 153 (NSGQGLGIEIIGTLQLVLCV). Topologically, residues 154-163 (LATTDRRRRD) are cytoplasmic. A helical membrane pass occupies residues 164 to 181 (LGGSAPLAIGLSVALGHL). The Extracellular portion of the chain corresponds to 182–186 (LAIDY). Residues 187-199 (TGCGINPARSFGS) lie within the membrane without spanning it. Positions 192–194 (NPA) match the NPA 2 motif. Residues 200 to 206 (AVITHNF) lie on the Extracellular side of the membrane. Residue N205 is glycosylated (N-linked (GlcNAc...) asparagine). The chain crosses the membrane as a helical span at residues 207–224 (SNHWIFWVGPFIGGALAV). The Cytoplasmic portion of the chain corresponds to 225–269 (LIYDFILAPRSSDLTDRVKVWTSGQVEEYDLDADDINSRVEMKPK). S247 carries the phosphoserine modification. The residue at position 253 (Y253) is a Phosphotyrosine. S262 carries the phosphoserine modification.

The protein belongs to the MIP/aquaporin (TC 1.A.8) family. In terms of assembly, homotetramer; each monomer provides an independent water pore. Component of the ankyrin-1 complex in the erythrocyte, composed of ANK1, RHCE, RHAG, SLC4A1, EPB42, GYPA, GYPB and AQP1. Interacts with EPHB2; involved in endolymph production in the inner ear. Identified in a complex with STOM. Interacts (via the N-terminal) with ANK1 (via ANK 1-5 repeats). Interacts (via the C-terminal) with EPB42. Detected in erythrocytes (at protein level). Expressed in a number of tissues including erythrocytes, renal tubules, retinal pigment epithelium, heart, lung, skeletal muscle, kidney and pancreas. Weakly expressed in brain, placenta and liver.

It is found in the cell membrane. The catalysed reaction is H2O(in) = H2O(out). It carries out the reaction nitric oxide(out) = nitric oxide(in). The enzyme catalyses CO2(out) = CO2(in). It catalyses the reaction glycerol(in) = glycerol(out). The catalysed reaction is H2O2(out) = H2O2(in). It carries out the reaction K(+)(in) = K(+)(out). The enzyme catalyses Na(+)(in) = Na(+)(out). With respect to regulation, the water channel activity is inhibited by P-choloromercuribenzene sulphonate and diethylpyrocarbonate(DPPC). The glycerol channel activity is inhibited by P-choloromercuribenzene sulphonate, diethylpyrocarbonate(DPPC), phloretin and Cu(2+). Inhibited by mercury. Forms a water channel that facilitates the transport of water across cell membranes, playing a crucial role in water homeostasis in various tissues. Could also be permeable to small solutes including hydrogen peroxide, glycerol and gases such as amonnia (NH3), nitric oxide (NO) and carbon dioxide (CO2). Recruited to the ankyrin-1 complex, a multiprotein complex of the erythrocyte membrane, it could be part of a CO2 metabolon, linking facilitated diffusion of CO2 across the membrane, anion exchange of Cl(-)/HCO3(-) and interconversion of dissolved CO2 and carbonic acid in the cytosol. In vitro, it shows non-selective gated cation channel activity and may be permeable to cations like K(+) and Na(+) in vivo. This is Aquaporin-1 from Homo sapiens (Human).